A 602-amino-acid polypeptide reads, in one-letter code: Solute carrier organic anion transporter family member 1C1 (602 aa).

The Cytoplasmic portion of the chain corresponds to 1-43; the sequence is MDTSSKENIQLFCKTSVQPVGRPSFKTEYPSSEEKQPCCGELK. The helical transmembrane segment at 44-63 threads the bilayer; that stretch reads VFLGALSFVYFAKALAEGYL. The Extracellular portion of the chain corresponds to 64-82; that stretch reads KSTITQIERRFDIPSSLVG. Residues 83 to 103 form a helical membrane-spanning segment; that stretch reads VIDGSFEIGNLLVITFVSYFG. Topologically, residues 104-109 are cytoplasmic; that stretch reads AKLHRP. Residues 110 to 134 traverse the membrane as a helical segment; the sequence is KIIGAGCLIMGVGTLLIAMPQFFME. The Extracellular portion of the chain corresponds to 135–139; it reads QYKYE. Residues 140–156 traverse the membrane as a helical segment; the sequence is IYSPSSNSTLSISPCLL. Topologically, residues 157-238 are cytoplasmic; the sequence is ESSSQLPVSV…ARDFLPSLKY (82 aa). Residues 190–216 are disordered; it reads PRSQSREDSNSSSEKSKFIRDDHTDYQ. The span at 193-214 shows a compositional bias: basic and acidic residues; sequence QSREDSNSSSEKSKFIRDDHTD. The helical transmembrane segment at 239–260 threads the bilayer; sequence LFGNPVYFLYLCTSTVQFNSLF. Residues 261-280 lie on the Extracellular side of the membrane; that stretch reads GMVTYKPKYIEQQYGQSSSR. A helical membrane pass occupies residues 281–304; the sequence is ANFVIGLINIPAVALGIFSGGIAM. The Cytoplasmic portion of the chain corresponds to 305 to 308; that stretch reads KKFR. A helical transmembrane segment spans residues 309-332; that stretch reads ISVCGAAKLYLGSSVFGYLLFLSL. Topologically, residues 333 to 444 are extracellular; the sequence is FALGCENSDV…NGCPQMFLYF (112 aa). The 56-residue stretch at 360–415 folds into the Kazal-like domain; that stretch reads RALFSDCNPRCKCSETKWEPMCGENGITYVSACPAGCQTSNRSGKNIIFYNCTCVG. 3 disulfides stabilise this stretch: Cys366–Cys396, Cys372–Cys392, and Cys381–Cys413. N-linked (GlcNAc...) asparagine glycosylation is found at Asn400, Asn410, and Asn423. The helical transmembrane segment at 445-467 threads the bilayer; that stretch reads LVISVITSYTLSLGGIPGYILLL. Over 468-476 the chain is Cytoplasmic; it reads RCIKPQLKS. A helical transmembrane segment spans residues 477–502; sequence FALGIYTLSIRVLAGIPAPVYFGVLI. The Extracellular portion of the chain corresponds to 503–536; it reads DTSCLKWGFKRCGSRGSCRLYDSNVFRHIYLGLT. The helical transmembrane segment at 537–554 threads the bilayer; the sequence is VILGTVSIFLSIAVLFIL. The Cytoplasmic portion of the chain corresponds to 555–602; it reads KKNYVSKHRNFITKRERTMVSTRFQKENCTTSDHLLQPKYWPGKETQL.

It belongs to the organo anion transporter (TC 2.A.60) family.

It localises to the cell membrane. The enzyme catalyses 3,3',5'-triiodo-L-thyronine(out) = 3,3',5'-triiodo-L-thyronine(in). The catalysed reaction is L-thyroxine(out) = L-thyroxine(in). It catalyses the reaction L-thyroxine sulfate(out) = L-thyroxine sulfate(in). Functionally, mediates the Na(+)-independent high affinity transport of organic anions such as the thyroid hormones L-thyroxine (T4), L-thyroxine sulfate (T4S), and 3,3',5'-triiodo-L-thyronine (reverse T3, rT3) at the plasma membrane. Regulates T4 levels in different brain regions by transporting T4, and also by serving as an export pump for T4S, which is a source of T4 after hydrolysis by local sulfatases. Increases the access of these substrates to the intracellular sites where they are metabolized by the deiodinases. Other potential substrates, such as triiodothyronine (T3), 17-beta-glucuronosyl estradiol (17beta-estradiol 17-O-(beta-D-glucuronate)), estrone-3-sulfate (E1S) and sulfobromophthalein (BSP) are transported with much lower efficiency. Transports T4 and E1S in a pH-insensitive manner. Facilitates the transport of thyroid hormones across the blood-brain barrier and into glia and neuronal cells in the brain. This Macaca fascicularis (Crab-eating macaque) protein is Solute carrier organic anion transporter family member 1C1 (SLCO1C1).